The following is a 256-amino-acid chain: Catechol O-methyltransferase A (256 aa).

An N-terminal signal peptide occupies residues 1–27; it reads MLWVVLAVVVVLASVLVLLRQSSGLLA. An N-linked (GlcNAc...) asparagine glycan is attached at N58. Residues V84, S114, E132, and D183 each contribute to the S-adenosyl-L-methionine site. A Mg(2+)-binding site is contributed by D183. Position 186 (K186) interacts with substrate. Residues D211 and N212 each coordinate Mg(2+). Residues N212 and E241 each contribute to the substrate site.

The protein belongs to the class I-like SAM-binding methyltransferase superfamily. Cation-dependent O-methyltransferase family. The cofactor is Mg(2+). Widely expressed. Has higher expression in females compared to males. Strongly expressed in liver and diencephalon. Expressed at lower levels in hindbrain, spinal cord, eye, telencephalon, spleen, gut, gill and muscle. Detected in ovary and testis. In eye, detected in all layers of the retina with highest expression in the inner nuclear layer. In gut, expressed in the lamina propria but has little or no expression in gut epithelium. In brain, has strongest expression near the midline of the telencephalon, in the periventricular gray zone of the optic tectum, in the preglomerular nucleus, and near the walls of the diencephalic ventricle.

Its subcellular location is the secreted. The enzyme catalyses a catechol + S-adenosyl-L-methionine = a guaiacol + S-adenosyl-L-homocysteine + H(+). In terms of biological role, catalyzes the O-methylation, and thereby the inactivation, of catecholamine neurotransmitters and catechol hormones. Shows highest activity towards catecholestrogens and dobutamine. Also has lower activity towards L-DOPA, dopamine and epinephrine. Active towards the xenobiotic compounds methyl-DOPA, carbidopa, isoproterenol, and apomorphine. The sequence is that of Catechol O-methyltransferase A from Danio rerio (Zebrafish).